The chain runs to 227 residues: Ubiquitin-conjugating enzyme E2 6 (227 aa).

The Cytoplasmic portion of the chain corresponds to 1-206 (MASKGAYKRL…NSKQSWVKSR (206 aa)). Positions 5–163 (GAYKRLMKEY…FPELIDKNRE (159 aa)) constitute a UBC core domain. The Glycyl thioester intermediate role is filled by Cys87. A helical transmembrane segment spans residues 207-225 (WSIAVLVFFALALARFFGA).

It belongs to the ubiquitin-conjugating enzyme family.

It is found in the endoplasmic reticulum membrane. It catalyses the reaction S-ubiquitinyl-[E1 ubiquitin-activating enzyme]-L-cysteine + [E2 ubiquitin-conjugating enzyme]-L-cysteine = [E1 ubiquitin-activating enzyme]-L-cysteine + S-ubiquitinyl-[E2 ubiquitin-conjugating enzyme]-L-cysteine.. It participates in protein modification; protein ubiquitination. Functionally, catalyzes the covalent attachment of ubiquitin to other proteins. Functions in degradation of misfolded or regulated proteins localized in the endoplasmic reticulum (ER) lumen or membrane via the ubiquitin-proteasome system. Cognate E2 conjugating enzyme for the doa10 ubiquitin ligase complex, which is part of the ERAD-C pathway responsible for the rapid degradation of membrane proteins with misfolded cytoplasmic domains. The protein is Ubiquitin-conjugating enzyme E2 6 (ubc6) of Schizosaccharomyces pombe (strain 972 / ATCC 24843) (Fission yeast).